Reading from the N-terminus, the 541-residue chain is MNTQPLERALAAFREVLGTAHVSTDESARAAAETATFATTHRIPAIISPGSAAEVEACVRIAREHGVPLYPVSTGKNWGYGSRVPTSDGAIVLSLARMNRILDFNEELAYVAIEPGVTMRQLVAYLNDRGSRLMLSVTGSTPDSSVVGNICDRGFGAGVNAERIAHICNIEVVLPNGERLNTGFGRFPGAQTASIHRWGIGPQLDGLFTQSNLGIVTRMTIWLAPRPRHHEIFYFRLRDERRVEAVTDIIRDLKLQGLPRASVSLWNDYKLVSMKGQYPWQEAAGKTPLPEALLAKLRRAWGGAAWLGGGAILAASQDQIAAERAVIRKALHPHVDKLSFVGQRAARVARLLQRPVQRLTGFDLSEVVRAYEQSPHLGIPMERNIRSAYWRKKAPPPEQTDPDRDRCGAIWLAPAVPSTGKHVGTALRIVRERALAHAFEPGISVIFATERCANIVVALMYDRELPGEDGRAMACYQDIFDRLAAQGYLPYRLGIQSQSALPAAQSSYGTVVGALKRALDPDDILAPGRYDFRHEWPPADN.

One can recognise an FAD-binding PCMH-type domain in the interval 39-226 (TTHRIPAIIS…TRMTIWLAPR (188 aa)).

The catalysed reaction is 1'-carboxy-chondrochloren A + FAD + 2 H(+) = chondrochloren A + FADH2 + CO2. It carries out the reaction 1'-carboxy-chondrochloren B + FAD + 2 H(+) = chondrochloren B + FADH2 + CO2. It participates in antibiotic biosynthesis. Its activity is regulated as follows. Activity is not affected by the addition of EDTA or/and EGTA chelators or in the presence of external metals like Zn(2+), Mg(2+), Mn(2+) and Fe(2+). Activity is inhibited under low oxygen conditions. Functionally, oxidative decarboxylase involved in the biosynthesis of the antibiotics chondrochloren A and chondrochloren B. Catalyzes the decarboxylation of biologically inactive pre-chondrochloren A and pre-chondrochloren B to yield mature chondrochloren A and chondrochloren B, respectively. Cannot decarboxylate free L-tyrosine, 3-chloro-tyrosine or a number of chlorinated and non-chlorinated analog substrates containing variable N-acyl chains. The polypeptide is 1'-carboxy-chondrochloren decarboxylase (Chondromyces crocatus).